The chain runs to 221 residues: UPF0502 protein PA14_19450 (221 aa).

Belongs to the UPF0502 family.

This chain is UPF0502 protein PA14_19450, found in Pseudomonas aeruginosa (strain UCBPP-PA14).